The chain runs to 330 residues: B3 domain-containing protein REM21 (330 aa).

Residues 23–116 (PRFFTVFLSH…SYEVSIYGRG (94 aa)) constitute a DNA-binding region (TF-B3). Acidic residues predominate over residues 129-138 (EISDDTEDDN). Positions 129–169 (EISDDTEDDNVSLHSPSNVSLDSLSNDSHHSTSNVSLRSLS) are disordered. Residues 142–162 (HSPSNVSLDSLSNDSHHSTSN) show a composition bias toward low complexity.

Its subcellular location is the nucleus. The polypeptide is B3 domain-containing protein REM21 (REM21) (Arabidopsis thaliana (Mouse-ear cress)).